The following is a 1269-amino-acid chain: Phospholipase D A (1269 aa).

The segment covering 55-64 has biased composition (polar residues); sequence YTSVGSAPTT. The tract at residues 55 to 121 is disordered; sequence YTSVGSAPTT…NNNLQSPTQS (67 aa). Low complexity-rich tracts occupy residues 65 to 87 and 95 to 114; these read NNNSNSNSNSNSSNRSLNNSGSS and NSNKKVNNNNNNNNNNNNNN. A coiled-coil region spans residues 131 to 192; sequence SKALHDFEEK…ELKSLDELLH (62 aa). Over residues 222–232 the composition is skewed to polar residues; that stretch reads NSVTNNTPSSA. Disordered stretches follow at residues 222–269 and 300–320; these read NSVT…SSST and NSYPNSIIPQGTPLDNPDPNL. Residues 233-269 show a composition bias toward low complexity; that stretch reads TPLTLSNNNNYTSSSLATSPTTNSSSSSSSSSSSSST. 2 consecutive PLD phosphodiesterase domains span residues 435–462 and 704–731; these read IYWSHHQKTLIIDQEIAFVGGVDFCFGR and EQIYVHSKLMIVDDRTIIVGSANINDRS. Residues His440, Lys442, Asp447, His709, Lys711, and Asp716 contribute to the active site. Residues 803–835 adopt a coiled-coil conformation; that stretch reads NNNNNSNINNNINNNNNEINNNNNNNNNNNSNE. Composition is skewed to low complexity over residues 810 to 850, 859 to 906, and 934 to 943; these read INNN…NSNS, NLPP…GTTN, and SSPQDSPQDS. Disordered regions lie at residues 810 to 966 and 983 to 1007; these read INNN…HQSP and SNEQLPPPPSSTTPPPPPPPLTTTD. Over residues 987 to 1003 the composition is skewed to pro residues; that stretch reads LPPPPSSTTPPPPPPPL. Positions 1059 to 1096 form a coiled coil; that stretch reads TTAQQQQQQQQQQQQQQQQQQQQQQQQQQQQQQQQQQQ. Positions 1116-1167 are disordered; the sequence is IKKKRSSISPSTSSNKLLLSGNGSGDSIRVVTDSGSSPRGQPRSMSSLHDHA. Residues 1122–1142 show a composition bias toward low complexity; that stretch reads SISPSTSSNKLLLSGNGSGDS. Over residues 1148–1162 the composition is skewed to polar residues; it reads DSGSSPRGQPRSMSS.

It belongs to the phospholipase D family.

It catalyses the reaction a 1,2-diacyl-sn-glycero-3-phosphocholine + H2O = a 1,2-diacyl-sn-glycero-3-phosphate + choline + H(+). With respect to regulation, inhibited by butan-1-ol. In terms of biological role, plays a role in cell growth. Hydrolyzes membrane phospholipids, such as PtdCho free headgroup and PtdOH (phosphatidic acid; signaling molecule on its own). Involved in the inhibition of actin-based motility and endocytosis. Its inhibition causes complete collapse of F-actin organization. This is Phospholipase D A (pldA) from Dictyostelium discoideum (Social amoeba).